A 203-amino-acid chain; its full sequence is MSRYTGPSWKQARRLGLSLTGTGKELARRNYVPGQHGPNNRSKLSEYGLQLAEKQKLRFTYGVGEKQFRNLFVQASKIKEGILGFNFMLLLERRLDNVVYRLGLATTRRQARQFVNHGHILVDGKRVDIPSYRVTPGQVISVREKSLKVPAILEAVEATLGRPAFVSFDAEKLEGSLTRLPERDEINPEINEALIVEFYNKML.

Residues 93-156 (RRLDNVVYRL…LKVPAILEAV (64 aa)) form the S4 RNA-binding domain.

This sequence belongs to the universal ribosomal protein uS4 family. Part of the 30S ribosomal subunit. Contacts protein S5. The interaction surface between S4 and S5 is involved in control of translational fidelity.

In terms of biological role, one of the primary rRNA binding proteins, it binds directly to 16S rRNA where it nucleates assembly of the body of the 30S subunit. With S5 and S12 plays an important role in translational accuracy. This Streptococcus sanguinis (strain SK36) protein is Small ribosomal subunit protein uS4.